The following is a 250-amino-acid chain: NADH-quinone oxidoreductase subunit C (250 aa).

Disordered stretches follow at residues 1 to 33 (MSDDSSDVKPGPKGPEQPAVEQSPENVPAPTGE) and 228 to 250 (LGGVPVEYKGGTVPPPDQRRSYN).

Belongs to the complex I 30 kDa subunit family. In terms of assembly, NDH-1 is composed of 14 different subunits. Subunits NuoB, C, D, E, F, and G constitute the peripheral sector of the complex.

It is found in the cell membrane. It carries out the reaction a quinone + NADH + 5 H(+)(in) = a quinol + NAD(+) + 4 H(+)(out). In terms of biological role, NDH-1 shuttles electrons from NADH, via FMN and iron-sulfur (Fe-S) centers, to quinones in the respiratory chain. The immediate electron acceptor for the enzyme in this species is believed to be a menaquinone. Couples the redox reaction to proton translocation (for every two electrons transferred, four hydrogen ions are translocated across the cytoplasmic membrane), and thus conserves the redox energy in a proton gradient. This is NADH-quinone oxidoreductase subunit C from Nocardioides sp. (strain ATCC BAA-499 / JS614).